The sequence spans 202 residues: LexA repressor (202 aa).

A DNA-binding region (H-T-H motif) is located at residues 28 to 48 (RAEIAQRLGFRSPNAAEEHLK). Residues S119 and K156 each act as for autocatalytic cleavage activity in the active site.

This sequence belongs to the peptidase S24 family. In terms of assembly, homodimer.

It carries out the reaction Hydrolysis of Ala-|-Gly bond in repressor LexA.. Functionally, represses a number of genes involved in the response to DNA damage (SOS response), including recA and lexA. Binds to the 16 bp palindromic sequence 5'-CTGTATATATATACAG-3'. In the presence of single-stranded DNA, RecA interacts with LexA causing an autocatalytic cleavage which disrupts the DNA-binding part of LexA, leading to derepression of the SOS regulon and eventually DNA repair. This chain is LexA repressor, found in Klebsiella pneumoniae (strain 342).